Reading from the N-terminus, the 108-residue chain is Protein phosphatase 1 regulatory subunit 1C (108 aa).

The interval 25–108 is disordered; it reads AEQIRKRRPT…ASEREEKWNH (84 aa). The segment covering 45–54 has biased composition (basic and acidic residues); that stretch reads NSPEIDEKRV. A compositionally biased stretch (polar residues) spans 55-73; that stretch reads TNTQESQNASPKQRKQSVY. Residues 99–108 show a composition bias toward basic and acidic residues; that stretch reads ASEREEKWNH.

Belongs to the protein phosphatase inhibitor 1 family.

Its subcellular location is the cytoplasm. In terms of biological role, may increase cell susceptibility to TNF-induced apoptosis. The sequence is that of Protein phosphatase 1 regulatory subunit 1C (Ppp1r1c) from Mus musculus (Mouse).